The chain runs to 498 residues: AP2-like ethylene-responsive transcription factor AIL7 (498 aa).

Over residues 186 to 195 the composition is skewed to polar residues; the sequence is TSDQPLSCNN. Residues 186–220 form a disordered region; sequence TSDQPLSCNNGERGGNSNKKKTVSKKETSDDSKKK. Basic and acidic residues predominate over residues 209-220; it reads SKKETSDDSKKK. 2 consecutive DNA-binding regions (AP2/ERF) follow at residues 231-297 and 333-391; these read IYRG…TNFP and IYRG…TNFE. Low complexity predominate over residues 422–451; it reads ESPSSSSSDHNLQQQQLLPSSSPSDQNPNS. The disordered stretch occupies residues 422 to 452; sequence ESPSSSSSDHNLQQQQLLPSSSPSDQNPNSI.

Belongs to the AP2/ERF transcription factor family. AP2 subfamily. In terms of assembly, interacts with HDG2, and possibly with HDG3, HDG7, ANL2, ATML1 and PDF2. As to expression, expressed in roots, seedlings, inflorescence, and siliques. Also detected at low levels in leaves.

It localises to the nucleus. Probably acts as a transcriptional activator. Binds to the GCC-box pathogenesis-related promoter element. May be involved in the regulation of gene expression by stress factors and by components of stress signal transduction pathways. This Arabidopsis thaliana (Mouse-ear cress) protein is AP2-like ethylene-responsive transcription factor AIL7.